The primary structure comprises 318 residues: Olfactory receptor 2T3 (318 aa).

Residues 1 to 30 (MCSGNQTSQNQTASTDFTLTGLFAESKHAA) lie on the Extracellular side of the membrane. 2 N-linked (GlcNAc...) asparagine glycosylation sites follow: Asn-5 and Asn-10. The helical transmembrane segment at 31-54 (LLYTVTFLLFLMALTGNALLILLI) threads the bilayer. The Cytoplasmic segment spans residues 55–62 (HSEPRLHT). A helical membrane pass occupies residues 63–84 (PMYFFISQLALMDLMYLCVTVP). Residues 85–105 (KMLVGQVTGDDTISPSGCGIQ) are Extracellular-facing. The cysteines at positions 102 and 194 are disulfide-linked. The chain crosses the membrane as a helical span at residues 106-125 (MFFYLTLAGAEVFLLAAMAY). Over 126 to 144 (DRYAAVCRPLHYPLLMNQR) the chain is Cytoplasmic. The helical transmembrane segment at 145-163 (VCQLLVSACWVLGMVDGLL) threads the bilayer. The Extracellular portion of the chain corresponds to 164–200 (LTPITMSFPFCQSRKILSFFCETPALLKLSCSDVSLY). Residues 201 to 224 (KTLMYLCCILMLLAPIMVISSSYT) form a helical membrane-spanning segment. The Cytoplasmic segment spans residues 225–241 (LILHLIHRMNSAAGHRK). The helical transmembrane segment at 242–264 (ALATCSSHMIIVLLLFGASFYTY) threads the bilayer. Topologically, residues 265-277 (MLPSSYHTAEQDM) are extracellular. A helical membrane pass occupies residues 278-297 (MVSAFYTIFTPVLNPLIYSL). Over 298-318 (RNKDVTRALRSMMQSRMNQEK) the chain is Cytoplasmic.

It belongs to the G-protein coupled receptor 1 family.

It is found in the cell membrane. In terms of biological role, odorant receptor. This is Olfactory receptor 2T3 (OR2T3) from Homo sapiens (Human).